A 124-amino-acid polypeptide reads, in one-letter code: uncharacterized protein (124 aa).

Functionally, not required for the biogenesis of c-type cytochromes. This is an uncharacterized protein from Rhodobacter capsulatus (strain ATCC BAA-309 / NBRC 16581 / SB1003).